Reading from the N-terminus, the 383-residue chain is 23S rRNA (uracil(747)-C(5))-methyltransferase RlmC (383 aa).

Positions 3, 11, 14, and 89 each coordinate [4Fe-4S] cluster. Glutamine 214, phenylalanine 243, glutamate 270, and asparagine 315 together coordinate S-adenosyl-L-methionine. The Nucleophile role is filled by cysteine 342.

Belongs to the class I-like SAM-binding methyltransferase superfamily. RNA M5U methyltransferase family. RlmC subfamily.

The catalysed reaction is uridine(747) in 23S rRNA + S-adenosyl-L-methionine = 5-methyluridine(747) in 23S rRNA + S-adenosyl-L-homocysteine + H(+). In terms of biological role, catalyzes the formation of 5-methyl-uridine at position 747 (m5U747) in 23S rRNA. The sequence is that of 23S rRNA (uracil(747)-C(5))-methyltransferase RlmC from Actinobacillus succinogenes (strain ATCC 55618 / DSM 22257 / CCUG 43843 / 130Z).